The chain runs to 103 residues: Protein translation factor SUI1 homolog (103 aa).

Belongs to the SUI1 family.

The sequence is that of Protein translation factor SUI1 homolog from Hyperthermus butylicus (strain DSM 5456 / JCM 9403 / PLM1-5).